Consider the following 256-residue polypeptide: uncharacterized protein (256 aa).

The N-terminal stretch at 1–24 (MIKRVNKLVLGISLLFLVISITAG) is a signal peptide. Cys-25 carries the N-palmitoyl cysteine lipid modification. Cys-25 is lipidated: S-diacylglycerol cysteine.

It belongs to the staphylococcal tandem lipoprotein family.

It is found in the cell membrane. This is an uncharacterized protein from Staphylococcus aureus (strain NCTC 8325 / PS 47).